Reading from the N-terminus, the 89-residue chain is Small ribosomal subunit protein uS15 (89 aa).

This sequence belongs to the universal ribosomal protein uS15 family. In terms of assembly, part of the 30S ribosomal subunit. Forms a bridge to the 50S subunit in the 70S ribosome, contacting the 23S rRNA.

In terms of biological role, one of the primary rRNA binding proteins, it binds directly to 16S rRNA where it helps nucleate assembly of the platform of the 30S subunit by binding and bridging several RNA helices of the 16S rRNA. Functionally, forms an intersubunit bridge (bridge B4) with the 23S rRNA of the 50S subunit in the ribosome. The protein is Small ribosomal subunit protein uS15 of Mycobacterium bovis (strain ATCC BAA-935 / AF2122/97).